The primary structure comprises 201 residues: Large ribosomal subunit protein uL4 (201 aa).

A disordered region spans residues Arg-44–Gly-71.

It belongs to the universal ribosomal protein uL4 family. Part of the 50S ribosomal subunit.

One of the primary rRNA binding proteins, this protein initially binds near the 5'-end of the 23S rRNA. It is important during the early stages of 50S assembly. It makes multiple contacts with different domains of the 23S rRNA in the assembled 50S subunit and ribosome. In terms of biological role, forms part of the polypeptide exit tunnel. The polypeptide is Large ribosomal subunit protein uL4 (Enterobacter sp. (strain 638)).